Reading from the N-terminus, the 149-residue chain is Ribonuclease pancreatic (149 aa).

The N-terminal stretch at 1-25 (MGLEKSLILLPLLVLVLAWVQPSLG) is a signal peptide. Residues K32 and R35 each coordinate substrate. Residue H37 is the Proton acceptor of the active site. 4 cysteine pairs are disulfide-bonded: C51–C109, C65–C120, C83–C135, and C90–C97. Residue 66 to 70 (KRVNT) coordinates substrate. The N-linked (GlcNAc...) asparagine glycan is linked to N87. Positions 91 and 110 each coordinate substrate. The active-site Proton donor is the H144.

This sequence belongs to the pancreatic ribonuclease family. Monomer. Interacts with and forms tight 1:1 complexes with RNH1. Dimerization of two such complexes may occur. Interaction with RNH1 inhibits this protein. In terms of tissue distribution, pancreas.

The protein resides in the secreted. The catalysed reaction is an [RNA] containing cytidine + H2O = an [RNA]-3'-cytidine-3'-phosphate + a 5'-hydroxy-ribonucleotide-3'-[RNA].. The enzyme catalyses an [RNA] containing uridine + H2O = an [RNA]-3'-uridine-3'-phosphate + a 5'-hydroxy-ribonucleotide-3'-[RNA].. In terms of biological role, endonuclease that catalyzes the cleavage of RNA on the 3' side of pyrimidine nucleotides. Acts on single-stranded and double-stranded RNA. This chain is Ribonuclease pancreatic (RNASE1), found in Acomys cahirinus (Cairo spiny mouse).